Consider the following 147-residue polypeptide: Deoxyuridine 5'-triphosphate nucleotidohydrolase (147 aa).

Position 24 (arginine 24) interacts with Mg(2+). DUTP is bound by residues 68–70 (PRS), 82–85 (GVID), tyrosine 88, glycine 93, isoleucine 95, and arginine 111.

Belongs to the dUTPase family.

It carries out the reaction dUTP + H2O = dUMP + diphosphate + H(+). Its function is as follows. This enzyme is involved in nucleotide metabolism: it produces dUMP, the immediate precursor of thymidine nucleotides and it decreases the intracellular concentration of dUTP so that uracil cannot be incorporated into DNA. This chain is Deoxyuridine 5'-triphosphate nucleotidohydrolase (OPG046), found in Homo sapiens (Human).